The primary structure comprises 56 residues: UPF0434 protein CbuK_1382 (56 aa).

This sequence belongs to the UPF0434 family.

The chain is UPF0434 protein CbuK_1382 from Coxiella burnetii (strain CbuK_Q154) (Coxiella burnetii (strain Q154)).